A 715-amino-acid chain; its full sequence is Poly(A) polymerase alpha-A (715 aa).

ATP is bound by residues 82 to 84, T91, 95 to 97, D149, K210, Y219, and 228 to 229; these read FGP, DID, and GV. 3 residues coordinate Mg(2+): D95, D97, and D149. The Nuclear localization signal 1 signature appears at 472–489; the sequence is RKQLHQLQPSHVSPKKKK. Disordered regions lie at residues 510-543, 560-590, and 607-693; these read DSDNSMSVPSPTNATRTSPLNSSGLSQGNSPAAP, QNNSTENLGGSLNESIPESATHPGFSSTPKP, and KPVS…DLSD. 2 stretches are compositionally biased toward polar residues: residues 515-539 and 560-588; these read MSVPSPTNATRTSPLNSSGLSQGNS and QNNSTENLGGSLNESIPESATHPGFSSTP. A Nuclear localization signal 2 motif is present at residues 624 to 639; the sequence is KRTSSPSNEDSPKKNK. A compositionally biased stretch (basic and acidic residues) spans 655–673; it reads DQNKLETEELKEVHSEEKS. Polar residues predominate over residues 674–692; it reads SSPVPGSLPFSQQSSTDLS.

This sequence belongs to the poly(A) polymerase family. In terms of assembly, monomer. Mg(2+) is required as a cofactor. Requires Mn(2+) as cofactor.

The protein localises to the nucleus. The enzyme catalyses RNA(n) + ATP = RNA(n)-3'-adenine ribonucleotide + diphosphate. Functionally, polymerase that creates the 3'-poly(A) tail of mRNA's. May acquire specificity through interaction with a cleavage and polyadenylation factor (CPSF). The polypeptide is Poly(A) polymerase alpha-A (papola-a) (Xenopus laevis (African clawed frog)).